A 471-amino-acid chain; its full sequence is A-type ATP synthase subunit B (471 aa).

It belongs to the ATPase alpha/beta chains family. Has multiple subunits with at least A(3), B(3), C, D, E, F, H, I and proteolipid K(x).

The protein resides in the cell membrane. Component of the A-type ATP synthase that produces ATP from ADP in the presence of a proton gradient across the membrane. The B chain is a regulatory subunit. The polypeptide is A-type ATP synthase subunit B (Natronomonas pharaonis (strain ATCC 35678 / DSM 2160 / CIP 103997 / JCM 8858 / NBRC 14720 / NCIMB 2260 / Gabara) (Halobacterium pharaonis)).